Consider the following 590-residue polypeptide: Monoterepene synthase TPS1, chloropastic (590 aa).

The transit peptide at 1-42 (MALNTFLHFPPCSLSSFSCAVPKLPLAIFHKTMARQIRCPRA) directs the protein to the chloroplast. Arg304, Asp341, Asp345, Arg483, and Asp486 together coordinate (2E)-geranyl diphosphate. Mg(2+) is bound by residues Asp341 and Asp345. Residues 341–345 (DDMYD) carry the DDXXD motif motif. Mg(2+) is bound by residues Asp486, Thr490, and Glu494.

The protein belongs to the terpene synthase family. Tpsb subfamily. As to quaternary structure, monomer. It depends on Mg(2+) as a cofactor.

It is found in the plastid. Its subcellular location is the chloroplast. It catalyses the reaction (2E)-geranyl diphosphate = beta-thujene + diphosphate. It carries out the reaction (2E)-geranyl diphosphate = sabinene + diphosphate. The catalysed reaction is (2E)-geranyl diphosphate = beta-pinene + diphosphate. The enzyme catalyses (2E)-geranyl diphosphate = alpha-terpinene + diphosphate. The protein operates within secondary metabolite biosynthesis; terpenoid biosynthesis. In terms of biological role, monoterpene synthase involved in the biosynthesis of volatile organic compounds. Mediates the conversion of (2E)-geranyl diphosphate (GPP) into beta-thujene, sabinene, beta-pinene and alpha-terpinene. Does not use (2E,6E)-farnesyl diphosphate (FPP) as substrate. This chain is Monoterepene synthase TPS1, chloropastic, found in Cananga odorata (Ylang-ylang tree).